The sequence spans 309 residues: Mitochondrial import receptor subunit TOM34 (309 aa).

Serine 8 bears the Phosphoserine mark. 3 TPR repeats span residues 9–42 (VEQL…LQAR), 51–84 (SVLY…VPFS), and 85–118 (IKPL…DNSV). The interval 158-189 (WNSLPSDNHKETAKTKSKEATATKSRVPSAGD) is disordered. Position 160 is a phosphoserine (serine 160). A compositionally biased stretch (basic and acidic residues) spans 164 to 178 (DNHKETAKTKSKEAT). Serine 186 bears the Phosphoserine mark. TPR repeat units lie at residues 193 to 226 (AKAL…SSLE), 227 to 260 (SATY…DGKN), and 261 to 294 (VKAF…EPRN). A Glycyl lysine isopeptide (Lys-Gly) (interchain with G-Cter in SUMO2) cross-link involves residue lysine 197.

Belongs to the Tom34 family. Interacts with HSP90A, VCP, ATP6V1D, KIAA0665, AMPK, and DMAP1 through its TPR repeat. In terms of tissue distribution, isoform 1 is ubiquitously expressed while isoform 2 is expressed only in mature testicular germ cells. Isoform 1 is expressed in all testicular cells. Isoform 2 is highly expressed in early to late pachytene cells but expression is significantly decreased in round spermatid cells.

The protein localises to the cytoplasm. It is found in the mitochondrion outer membrane. Functionally, plays a role in the import of cytosolically synthesized preproteins into mitochondria. Binds the mature portion of precursor proteins. Interacts with cellular components, and possesses weak ATPase activity. May be a chaperone-like protein that helps to keep newly synthesized precursors in an unfolded import compatible state. The chain is Mitochondrial import receptor subunit TOM34 (Tomm34) from Mus musculus (Mouse).